A 428-amino-acid chain; its full sequence is 3-phosphoshikimate 1-carboxyvinyltransferase (428 aa).

Positions 23, 24, and 28 each coordinate 3-phosphoshikimate. Residue Lys-23 coordinates phosphoenolpyruvate. Phosphoenolpyruvate is bound by residues Gly-92 and Arg-120. Positions 165, 167, 312, and 339 each coordinate 3-phosphoshikimate. Position 167 (Gln-167) interacts with phosphoenolpyruvate. Asp-312 acts as the Proton acceptor in catalysis. Positions 343 and 384 each coordinate phosphoenolpyruvate.

It belongs to the EPSP synthase family. As to quaternary structure, monomer.

It localises to the cytoplasm. The catalysed reaction is 3-phosphoshikimate + phosphoenolpyruvate = 5-O-(1-carboxyvinyl)-3-phosphoshikimate + phosphate. The protein operates within metabolic intermediate biosynthesis; chorismate biosynthesis; chorismate from D-erythrose 4-phosphate and phosphoenolpyruvate: step 6/7. Functionally, catalyzes the transfer of the enolpyruvyl moiety of phosphoenolpyruvate (PEP) to the 5-hydroxyl of shikimate-3-phosphate (S3P) to produce enolpyruvyl shikimate-3-phosphate and inorganic phosphate. The chain is 3-phosphoshikimate 1-carboxyvinyltransferase from Sulfurimonas denitrificans (strain ATCC 33889 / DSM 1251) (Thiomicrospira denitrificans (strain ATCC 33889 / DSM 1251)).